The sequence spans 83 residues: Glutaredoxin 3 (83 aa).

The Glutaredoxin domain maps to 2 to 83 (ANVEIYTKET…ARGGLDPLLK (82 aa)). Cysteine 12 and cysteine 15 are disulfide-bonded.

It belongs to the glutaredoxin family. Monomer.

Its function is as follows. The disulfide bond functions as an electron carrier in the glutathione-dependent synthesis of deoxyribonucleotides by the enzyme ribonucleotide reductase. In addition, it is also involved in reducing some disulfides in a coupled system with glutathione reductase. The sequence is that of Glutaredoxin 3 (grxC) from Escherichia coli O157:H7.